A 203-amino-acid chain; its full sequence is MARFRGSITKVSRRLGIALAPKAEKYLERRPFPPGQHGQGRKGKVSEYALQLREKQKMKYLYGILEKQFRNYYKKAVSQRGVTGDNLVKLLERRFDNVVFRAGFAPSRSGARQLVTHGHLLINGKKVDIPSYIVSPSEVIEFRQRSKNMGAVTDSLNKAPESRIPSWIQVDKANQKAVFLSVPERVEVQEPFNEQLVVELYSK.

The S4 RNA-binding domain maps to 93–173 (RRFDNVVFRA…IPSWIQVDKA (81 aa)).

It belongs to the universal ribosomal protein uS4 family. As to quaternary structure, part of the 30S ribosomal subunit. Contacts protein S5. The interaction surface between S4 and S5 is involved in control of translational fidelity.

In terms of biological role, one of the primary rRNA binding proteins, it binds directly to 16S rRNA where it nucleates assembly of the body of the 30S subunit. Functionally, with S5 and S12 plays an important role in translational accuracy. This Pelodictyon phaeoclathratiforme (strain DSM 5477 / BU-1) protein is Small ribosomal subunit protein uS4.